Here is a 1687-residue protein sequence, read N- to C-terminus: Zinc finger protein 142 (1687 aa).

2 disordered regions span residues 1–23 (MTDP…LCPE) and 83–150 (TLTP…RLEG). The span at 125–140 (KEEKSDTQKDSQKAVD) shows a compositional bias: basic and acidic residues. Phosphoserine is present on Ser154. 3 consecutive C2H2-type zinc fingers follow at residues 163–185 (HMCP…LHLH), 219–242 (HHCP…ASMH), and 253–275 (YACP…LKSH). The C2H2-type 4; atypical zinc-finger motif lies at 286 to 311 (LRCFQEGCSYAAPDRKAFIKHLKETH). C2H2-type zinc fingers lie at residues 316 to 340 (VECR…HKSH), 343 to 366 (FHCP…KQGH), 372 to 395 (LRCT…GKMH), 401 to 423 (HQCP…MLLH), 429 to 451 (HKCE…MLTH), 457 to 479 (YMCT…MRKH), 485 to 507 (YQCN…KLRH), 512 to 536 (LMCE…SQHH), 544 to 567 (YPCH…NCKH), and 573 to 596 (FHCA…RKAH). Lys594 participates in a covalent cross-link: Glycyl lysine isopeptide (Lys-Gly) (interchain with G-Cter in SUMO2). 5 disordered regions span residues 613–690 (EPEG…EVEE), 704–798 (LESV…PPLP), 897–935 (KGLP…EAEL), 947–1014 (REPE…SPTE), and 1052–1092 (GRGG…GDGD). Residues 725–739 (PLGLEGPDGLEGPEL) are compositionally biased toward low complexity. Polar residues predominate over residues 1061-1075 (TPQTQPDVSPLSNGD). Low complexity predominate over residues 1082 to 1092 (GSTESSSGDGD). C2H2-type zinc fingers lie at residues 1135 to 1158 (LHCS…KRRH), 1171 to 1194 (LQCG…RLKH), 1200 to 1222 (HQCP…QSRH), 1228 to 1251 (IPCS…LRVH), 1257 to 1280 (HFCP…NSCH), 1286 to 1309 (FACS…LRRH), 1328 to 1351 (LHCS…RKQH), 1354 to 1377 (LECG…RQQH), 1380 to 1403 (HRCQ…LEQH), 1424 to 1446 (LHCP…VKGH), 1452 to 1474 (YKCT…SRIH), 1480 to 1502 (YHCH…MRIH), 1508 to 1530 (YLCP…MTKH), 1536 to 1559 (YQCP…ETRH), and 1565 to 1587 (FMCE…LRKH). Residue Lys1193 forms a Glycyl lysine isopeptide (Lys-Gly) (interchain with G-Cter in SUMO2) linkage. Lys1242 is covalently cross-linked (Glycyl lysine isopeptide (Lys-Gly) (interchain with G-Cter in SUMO2)). Lys1591 participates in a covalent cross-link: Glycyl lysine isopeptide (Lys-Gly) (interchain with G-Cter in SUMO2). 2 C2H2-type zinc fingers span residues 1593 to 1615 (YVCN…ALTH) and 1621 to 1643 (FFCR…VRRH). The disordered stretch occupies residues 1638–1687 (KHVRRHHPDQADPNQGVGKDPTTPTVHLHDVQLEDPSPPAPAAPHTGPEG).

Belongs to the krueppel C2H2-type zinc-finger protein family.

It is found in the nucleus. May be involved in transcriptional regulation. The protein is Zinc finger protein 142 of Homo sapiens (Human).